We begin with the raw amino-acid sequence, 243 residues long: UPF0246 protein SAK_2020 (243 aa).

It belongs to the UPF0246 family.

The chain is UPF0246 protein SAK_2020 from Streptococcus agalactiae serotype Ia (strain ATCC 27591 / A909 / CDC SS700).